Consider the following 300-residue polypeptide: Formamidopyrimidine-DNA glycosylase (300 aa).

Proline 2 functions as the Schiff-base intermediate with DNA in the catalytic mechanism. Catalysis depends on glutamate 3, which acts as the Proton donor. The active-site Proton donor; for beta-elimination activity is lysine 60. The DNA site is built by histidine 108, arginine 136, and arginine 181. The segment at 266–300 (WVYSRAGQPCRICNTPLEKIKLAGRSTHFCPQCQK) adopts an FPG-type zinc-finger fold. Residue arginine 290 is the Proton donor; for delta-elimination activity of the active site.

This sequence belongs to the FPG family. In terms of assembly, monomer. Requires Zn(2+) as cofactor.

The catalysed reaction is Hydrolysis of DNA containing ring-opened 7-methylguanine residues, releasing 2,6-diamino-4-hydroxy-5-(N-methyl)formamidopyrimidine.. It carries out the reaction 2'-deoxyribonucleotide-(2'-deoxyribose 5'-phosphate)-2'-deoxyribonucleotide-DNA = a 3'-end 2'-deoxyribonucleotide-(2,3-dehydro-2,3-deoxyribose 5'-phosphate)-DNA + a 5'-end 5'-phospho-2'-deoxyribonucleoside-DNA + H(+). Functionally, involved in base excision repair of DNA damaged by oxidation or by mutagenic agents. Acts as a DNA glycosylase that recognizes and removes damaged bases. Has a preference for oxidized purines, such as 7,8-dihydro-8-oxoguanine (8-oxoG). Has AP (apurinic/apyrimidinic) lyase activity and introduces nicks in the DNA strand. Cleaves the DNA backbone by beta-delta elimination to generate a single-strand break at the site of the removed base with both 3'- and 5'-phosphates. In Trichodesmium erythraeum (strain IMS101), this protein is Formamidopyrimidine-DNA glycosylase.